A 291-amino-acid chain; its full sequence is Verruculogen synthase (291 aa).

The active site involves tyrosine 68.

Belongs to the PhyH family. As to quaternary structure, homodimer. Fe cation serves as cofactor.

The catalysed reaction is fumitremorgin B + 2-oxoglutarate + AH2 + 2 O2 = verruculogen + succinate + A + CO2 + H2O. It participates in mycotoxin biosynthesis. Its function is as follows. Verruculogen synthase; part of the gene cluster that mediates the biosynthesis of fumitremorgins, indole alkaloids that carry not only intriguing chemical structures, but also interesting biological and pharmacological activities. The biosynthesis of fumitremorgin-type alkaloids begins by condensation of the two amino acids L-tryptophan and L-proline to brevianamide F, catalyzed by the non-ribosomal peptide synthetase ftmA. Brevianamide F is then prenylated by the prenyltransferase ftmPT1/ftmB in the presence of dimethylallyl diphosphate, resulting in the formation of tryprostatin B. The three cytochrome P450 monooxygenases, ftmP450-1/ftmC, ftmP450-2/ftmE and ftmP450-3/FtmG, are responsible for the conversion of tryprostatin B to 6-hydroxytryprostatin B, tryprostatin A to fumitremorgin C and fumitremorgin C to 12,13-dihydroxyfumitremorgin C, respectively. The putative methyltransferase ftmMT/ftmD is expected for the conversion of 6-hydroxytryprostatin B to tryprostatin A. FtmPT2/FtmH catalyzes the prenylation of 12,13-dihydroxyfumitre-morgin C in the presence of dimethylallyl diphosphate, resulting in the formation of fumitremorgin B. Fumitremorgin B is further converted to verruculogen by ftmOx1/ftmF via the insertion of an endoperoxide bond between the two prenyl moieties. In some fungal species, verruculogen is further converted to fumitremorgin A, but the enzymes involved in this step have not been identified yet. In Aspergillus fumigatus (strain ATCC MYA-4609 / CBS 101355 / FGSC A1100 / Af293) (Neosartorya fumigata), this protein is Verruculogen synthase.